Reading from the N-terminus, the 298-residue chain is Acetylglutamate kinase (298 aa).

Substrate contacts are provided by residues 73–74, R95, and N188; that span reads GG.

The protein belongs to the acetylglutamate kinase family. ArgB subfamily.

The protein resides in the cytoplasm. The enzyme catalyses N-acetyl-L-glutamate + ATP = N-acetyl-L-glutamyl 5-phosphate + ADP. The protein operates within amino-acid biosynthesis; L-arginine biosynthesis; N(2)-acetyl-L-ornithine from L-glutamate: step 2/4. Catalyzes the ATP-dependent phosphorylation of N-acetyl-L-glutamate. The protein is Acetylglutamate kinase of Nostoc punctiforme (strain ATCC 29133 / PCC 73102).